We begin with the raw amino-acid sequence, 511 residues long: Serine hydroxymethyltransferase (511 aa).

The residue at position 287 (Lys-287) is an N6-(pyridoxal phosphate)lysine.

This sequence belongs to the SHMT family. Homotetramer. Pyridoxal 5'-phosphate serves as cofactor.

It carries out the reaction (6R)-5,10-methylene-5,6,7,8-tetrahydrofolate + glycine + H2O = (6S)-5,6,7,8-tetrahydrofolate + L-serine. The protein operates within one-carbon metabolism; tetrahydrofolate interconversion. Functionally, interconversion of serine and glycine. In Caenorhabditis briggsae, this protein is Serine hydroxymethyltransferase.